We begin with the raw amino-acid sequence, 255 residues long: Triosephosphate isomerase (255 aa).

9–11 (NWK) is a substrate binding site. Catalysis depends on His-95, which acts as the Electrophile. Catalysis depends on Glu-167, which acts as the Proton acceptor. Substrate is bound by residues Gly-173, Ser-212, and 233–234 (GG).

It belongs to the triosephosphate isomerase family. Homodimer.

It is found in the cytoplasm. It carries out the reaction D-glyceraldehyde 3-phosphate = dihydroxyacetone phosphate. It functions in the pathway carbohydrate biosynthesis; gluconeogenesis. It participates in carbohydrate degradation; glycolysis; D-glyceraldehyde 3-phosphate from glycerone phosphate: step 1/1. Involved in the gluconeogenesis. Catalyzes stereospecifically the conversion of dihydroxyacetone phosphate (DHAP) to D-glyceraldehyde-3-phosphate (G3P). The protein is Triosephosphate isomerase of Yersinia pseudotuberculosis serotype O:1b (strain IP 31758).